Reading from the N-terminus, the 153-residue chain is uncharacterized protein (153 aa).

The disordered stretch occupies residues 19 to 46 (EKSTRLEEDAMESEPLAGTKTRGRGRRR).

This is an uncharacterized protein from Homo sapiens (Human).